A 393-amino-acid polypeptide reads, in one-letter code: Cytochrome b (393 aa).

The Mitochondrial matrix portion of the chain corresponds to 1–33 (MTIRNQRFSLLKQPISSTLNQHLVDYPTPSNLS). Residues 34–57 (YWWGFGSLAGICLVIQIVTGVFLA) traverse the membrane as a helical segment. At 58 to 80 (MHYTPHVDLAFNSVEHIMRDVEG) the chain is on the mitochondrial intermembrane side. A helical membrane pass occupies residues 81–108 (GWLLRYMHANGASMFFIVVYLHIFRGLY). Heme b is bound by residues His88 and His102. Residues 109 to 116 (YASYSSPR) lie on the Mitochondrial matrix side of the membrane. A helical membrane pass occupies residues 117 to 141 (EFVWCLGVVIFLLMIVTAFIGYVLP). At 142 to 178 (WGQMSFWGATVITSLASAIPVVGDTIVTWLWGGFSVD) the chain is on the mitochondrial intermembrane side. The chain crosses the membrane as a helical span at residues 179-210 (NATLNRFFSLHYLLPFILVGASLLHLAALHQY). Heme b contacts are provided by His189 and His203. His208 contributes to the a ubiquinone binding site. Topologically, residues 211–229 (GSNNPLGVHSEMDKIAFYP) are mitochondrial matrix. Residues 230–252 (YFYVKDLVGWVAFAIFFSIWIFY) traverse the membrane as a helical segment. Residues 253-293 (APNVLGHPDNYIPANPMSTPPHIVPEWYFLPIYAILRSIPD) lie on the Mitochondrial intermembrane side of the membrane. The chain crosses the membrane as a helical span at residues 294-314 (KAGGVAAIALVFICLLALPFF). Residues 315 to 325 (KSMYVRSSSFR) lie on the Mitochondrial matrix side of the membrane. A helical transmembrane segment spans residues 326-346 (PIYQGMFWLLLADCLLLGWIG). The Mitochondrial intermembrane segment spans residues 347-353 (CQPVEAP). A helical transmembrane segment spans residues 354 to 370 (FVTIGQISSLVFFLFFA). The Mitochondrial matrix segment spans residues 371 to 393 (ITPILGRVGRGIPNSYTDETDHT).

Belongs to the cytochrome b family. As to quaternary structure, component of the ubiquinol-cytochrome c oxidoreductase (cytochrome b-c1 complex, complex III, CIII), a multisubunit enzyme composed of 10 subunits. The complex is composed of 3 respiratory subunits cytochrome b (MT-CYB), cytochrome c1 (CYC1-1 or CYC1-2) and Rieske protein (UCR1-1 or UCR1-2), 2 core protein subunits MPPalpha1 (or MPPalpha2) and MPPB, and 5 low-molecular weight protein subunits QCR7-1 (or QCR7-2), UCRQ-1 (or UCRQ-2), QCR9, UCRY and probably QCR6-1 (or QCR6-2). The complex exists as an obligatory dimer and forms supercomplexes (SCs) in the inner mitochondrial membrane with NADH-ubiquinone oxidoreductase (complex I, CI), resulting in different assemblies (supercomplexes SCI(1)III(2) and SCI(2)III(4)). The cofactor is heme b.

Its subcellular location is the mitochondrion inner membrane. Component of the ubiquinol-cytochrome c oxidoreductase, a multisubunit transmembrane complex that is part of the mitochondrial electron transport chain which drives oxidative phosphorylation. The respiratory chain contains 3 multisubunit complexes succinate dehydrogenase (complex II, CII), ubiquinol-cytochrome c oxidoreductase (cytochrome b-c1 complex, complex III, CIII) and cytochrome c oxidase (complex IV, CIV), that cooperate to transfer electrons derived from NADH and succinate to molecular oxygen, creating an electrochemical gradient over the inner membrane that drives transmembrane transport and the ATP synthase. The cytochrome b-c1 complex catalyzes electron transfer from ubiquinol to cytochrome c, linking this redox reaction to translocation of protons across the mitochondrial inner membrane, with protons being carried across the membrane as hydrogens on the quinol. In the process called Q cycle, 2 protons are consumed from the matrix, 4 protons are released into the intermembrane space and 2 electrons are passed to cytochrome c. Cytochrome b is a catalytic core subunit containing 2 b-type hemes BL and BH topographically segregated in the quinone reduction (Qi) and quinol oxidation (Q0) sites on opposite sides of the membrane. The polypeptide is Cytochrome b (MT-CYB) (Arabidopsis thaliana (Mouse-ear cress)).